We begin with the raw amino-acid sequence, 89 residues long: MVCKRWILYGRVQGVGLRHFLRVHGVRLQLEGYVRNLPDGSVEVVAQGEKEKVLKLKTIILQGNGFSRLEDVQEEDFPIGNYGSFHIEY.

Residues 3–89 (CKRWILYGRV…GNYGSFHIEY (87 aa)) form the Acylphosphatase-like domain. Active-site residues include arginine 18 and asparagine 36.

Belongs to the acylphosphatase family.

The catalysed reaction is an acyl phosphate + H2O = a carboxylate + phosphate + H(+). The sequence is that of Acylphosphatase (acyP) from Petrotoga mobilis (strain DSM 10674 / SJ95).